Consider the following 463-residue polypeptide: Adenylosuccinate synthetase, chloroplastic (463 aa).

Residues 44 to 50 (GDEGKGK) and 72 to 74 (GHT) contribute to the GTP site. The Proton acceptor role is filled by D45. Residues D45 and G72 each coordinate Mg(2+). Residues 45–48 (DEGK), 70–73 (NAGH), T164, R178, N256, T271, and R335 contribute to the IMP site. The active-site Proton donor is H73. 331 to 337 (TTTGRPR) contacts substrate. Residues R337, 363–365 (KLD), and 446–448 (GVG) each bind GTP.

This sequence belongs to the adenylosuccinate synthetase family. In terms of assembly, homodimer. Mg(2+) is required as a cofactor.

The protein localises to the plastid. Its subcellular location is the chloroplast. It carries out the reaction IMP + L-aspartate + GTP = N(6)-(1,2-dicarboxyethyl)-AMP + GDP + phosphate + 2 H(+). The protein operates within purine metabolism; AMP biosynthesis via de novo pathway; AMP from IMP: step 1/2. Its function is as follows. Plays an important role in the de novo pathway and in the salvage pathway of purine nucleotide biosynthesis. Catalyzes the first committed step in the biosynthesis of AMP from IMP. In Chlamydomonas reinhardtii (Chlamydomonas smithii), this protein is Adenylosuccinate synthetase, chloroplastic.